Consider the following 197-residue polypeptide: Imidazoleglycerol-phosphate dehydratase (197 aa).

Belongs to the imidazoleglycerol-phosphate dehydratase family.

The protein localises to the cytoplasm. The enzyme catalyses D-erythro-1-(imidazol-4-yl)glycerol 3-phosphate = 3-(imidazol-4-yl)-2-oxopropyl phosphate + H2O. It participates in amino-acid biosynthesis; L-histidine biosynthesis; L-histidine from 5-phospho-alpha-D-ribose 1-diphosphate: step 6/9. The protein is Imidazoleglycerol-phosphate dehydratase of Streptomyces avermitilis (strain ATCC 31267 / DSM 46492 / JCM 5070 / NBRC 14893 / NCIMB 12804 / NRRL 8165 / MA-4680).